We begin with the raw amino-acid sequence, 369 residues long: MKFIDEARIEVIAGDGGDGSASMRREKFVPFGGPDGGDGGRGGSVYAIADRNINTLIDYRYAKKHLARNGENGRGSDCYGKGGDDITLRMPVGTVITDMDTGELIADLTEHDQQVLLAKGGAGGLGNLHFKSSTNRAPRQKTDGKPGERRMLKLELKVLADVGLLGMPNAGKSTFISSVSNAKPKIADYPFTTLAPNLGVVRVGPSKSFVIADIPGLIEGAAEGAGLGHQFLRHLQRTGLLLHLVDIAPFDEGVDPVAEATAIVGELRKYDEALYEKPRWLVLNKLDMVPEDERAARVADFLERFDWHGPVFEISALTGQGCEALCYAIYDYLAEHSDAHRAAEAEDLAADVRFRDAPPAANAAPGDDA.

Positions methionine 1–leucine 159 constitute an Obg domain. Residues leucine 128–glycine 147 form a disordered region. The OBG-type G domain maps to alanine 160–alanine 334. Residues glycine 166–serine 173, phenylalanine 191–alanine 195, aspartate 213–glycine 216, asparagine 284–aspartate 287, and serine 315–leucine 317 contribute to the GTP site. Mg(2+) contacts are provided by serine 173 and threonine 193.

Belongs to the TRAFAC class OBG-HflX-like GTPase superfamily. OBG GTPase family. Monomer. Mg(2+) is required as a cofactor.

The protein localises to the cytoplasm. In terms of biological role, an essential GTPase which binds GTP, GDP and possibly (p)ppGpp with moderate affinity, with high nucleotide exchange rates and a fairly low GTP hydrolysis rate. Plays a role in control of the cell cycle, stress response, ribosome biogenesis and in those bacteria that undergo differentiation, in morphogenesis control. The polypeptide is GTPase Obg (Burkholderia multivorans (strain ATCC 17616 / 249)).